The following is a 135-amino-acid chain: Succinate dehydrogenase assembly factor 2, mitochondrial (135 aa).

This sequence belongs to the SDHAF2 family. In terms of assembly, interacts with the flavoprotein subunit within the SDH catalytic dimer.

The protein resides in the mitochondrion matrix. In terms of biological role, plays an essential role in the assembly of succinate dehydrogenase (SDH), an enzyme complex (also referred to as respiratory complex II) that is a component of both the tricarboxylic acid (TCA) cycle and the mitochondrial electron transport chain, and which couples the oxidation of succinate to fumarate with the reduction of ubiquinone (coenzyme Q) to ubiquinol. Required for flavinylation (covalent attachment of FAD) of the flavoprotein subunit of the SDH catalytic dimer. The chain is Succinate dehydrogenase assembly factor 2, mitochondrial from Meyerozyma guilliermondii (strain ATCC 6260 / CBS 566 / DSM 6381 / JCM 1539 / NBRC 10279 / NRRL Y-324) (Yeast).